The primary structure comprises 4115 residues: Transcription-associated protein 1 (4115 aa).

A compositionally biased stretch (polar residues) spans 1–11 (MDPSIPSTSHR). Disordered stretches follow at residues 1–21 (MDPS…GVQP) and 543–563 (ESEQ…KKTS). The segment covering 544–563 (SEQKRNELPTPTKEHTKKTS) has biased composition (basic and acidic residues). 2 TPR repeats span residues 1341-1374 (LDGL…LLDL) and 1820-1853 (QDYD…EVIP). Residues 2678 to 2701 (LEEPEPMEVDQPKNAPAEEPKDNK) are disordered. Residues 2808–3421 (LIEFISSKHE…SNGASKVSKS (614 aa)) form the FAT domain. The TPR 3 repeat unit spans residues 2855–2888 (IETLESLGALYKELAEFDQYSAIWERRSVFPETM). The PI3K/PI4K catalytic domain maps to 3740-4100 (EPYFEIVMRG…CNSLIIRAKD (361 aa)). Residues 3746 to 3752 (VMRGGQV) are G-loop. The catalytic loop stretch occupies residues 3959-3967 (NLSPMTPHQ). The tract at residues 3979-4006 (NPFYRFELGTGQLMDIEHFAHEVPFRLT) is activation loop. Residues 4083 to 4115 (DAKVKKDDCNSLIIRAKDSDNLSRMPPTYHAWF) form the FATC domain.

The protein belongs to the PI3/PI4-kinase family. TRA1 subfamily.

It is found in the nucleus. Influences germ cell fate in hermaphrodites. Acts downstream of tra-2 and tra-3 and through the Tip60 histone acetyltransferase complex to regulate germ cell fate decisions. Required for spermatogenesis and embryonic development. Acts with tra-2 to promote expression of fog-3 and control male tail development. Involved in the negative regulation of vulval development. The protein is Transcription-associated protein 1 of Caenorhabditis briggsae.